Here is a 325-residue protein sequence, read N- to C-terminus: N-acetyl-gamma-glutamyl-phosphate reductase (325 aa).

The active site involves Cys-135.

This sequence belongs to the NAGSA dehydrogenase family. Type 1 subfamily.

Its subcellular location is the cytoplasm. It carries out the reaction N-acetyl-L-glutamate 5-semialdehyde + phosphate + NADP(+) = N-acetyl-L-glutamyl 5-phosphate + NADPH + H(+). Its pathway is amino-acid biosynthesis; L-arginine biosynthesis; N(2)-acetyl-L-ornithine from L-glutamate: step 3/4. Catalyzes the NADPH-dependent reduction of N-acetyl-5-glutamyl phosphate to yield N-acetyl-L-glutamate 5-semialdehyde. This Flavobacterium johnsoniae (strain ATCC 17061 / DSM 2064 / JCM 8514 / BCRC 14874 / CCUG 350202 / NBRC 14942 / NCIMB 11054 / UW101) (Cytophaga johnsonae) protein is N-acetyl-gamma-glutamyl-phosphate reductase.